Here is a 364-residue protein sequence, read N- to C-terminus: Poly(3-hydroxyalkanoate) polymerase subunit PhaE (364 aa).

Residues 322–364 (SGKTPTTALKAPAPATKATEKPATRATTRRKTAAKPTGGTADD) form a disordered region. The span at 324–338 (KTPTTALKAPAPATK) shows a compositional bias: low complexity.

It belongs to the PHA/PHB synthase family. Type III PhaE subfamily. As to quaternary structure, forms a heterodimer with PhaC, which may multimerize in the presence of 3-hydroxybutyryl-CoA.

The protein localises to the cytoplasm. It functions in the pathway biopolymer metabolism; poly-(R)-3-hydroxybutanoate biosynthesis. In terms of biological role, polymerizes D(-)-3-hydroxybutyryl-CoA to create polyhydroxybutyrate (PHB) which consists of thousands of hydroxybutyrate molecules linked end to end. This subunit has no catalytic activity but enhances the activity of PhaC, the catalytic subunit. The protein is Poly(3-hydroxyalkanoate) polymerase subunit PhaE of Thiocystis violacea.